A 360-amino-acid chain; its full sequence is Peptide chain release factor 1 (360 aa).

At glutamine 235 the chain carries N5-methylglutamine. Positions 280–293 (DKQSHEQQAKEAAT) are enriched in basic and acidic residues. A disordered region spans residues 280-300 (DKQSHEQQAKEAATRKSLIGS).

It belongs to the prokaryotic/mitochondrial release factor family. Methylated by PrmC. Methylation increases the termination efficiency of RF1.

It localises to the cytoplasm. Its function is as follows. Peptide chain release factor 1 directs the termination of translation in response to the peptide chain termination codons UAG and UAA. The sequence is that of Peptide chain release factor 1 from Paraburkholderia xenovorans (strain LB400).